The primary structure comprises 77 residues: Dermatoxin-S1 (77 aa).

A signal peptide spans 1–22; it reads MAFLKKSLFLILFLGLVPLSFC. A propeptide spanning residues 23-44 is cleaved from the precursor; it reads ENDKREGENEEEQDDDQSEEKR. The residue at position 76 (Q76) is a Glutamine amide.

As to expression, expressed by the skin glands.

It is found in the secreted. It localises to the target cell membrane. Functionally, antimicrobial peptide with potent activity against Gram-positive bacteria B.megaterium, C.glutamicum and S.aureus and mollicutes A.laidlawii and S.melliferum. Less active against Gram-negative bacteria B.cepacia, P.aeruginosa, S.typhimurium and S.meliloti. Probably acts by disturbing membrane functions with its amphipathic structure. The chain is Dermatoxin-S1 from Phyllomedusa sauvagei (Sauvage's leaf frog).